Reading from the N-terminus, the 384-residue chain is Lipid-A-disaccharide synthase 1 (384 aa).

It belongs to the LpxB family.

The enzyme catalyses a lipid X + a UDP-2-N,3-O-bis[(3R)-3-hydroxyacyl]-alpha-D-glucosamine = a lipid A disaccharide + UDP + H(+). The protein operates within bacterial outer membrane biogenesis; LPS lipid A biosynthesis. Functionally, condensation of UDP-2,3-diacylglucosamine and 2,3-diacylglucosamine-1-phosphate to form lipid A disaccharide, a precursor of lipid A, a phosphorylated glycolipid that anchors the lipopolysaccharide to the outer membrane of the cell. The chain is Lipid-A-disaccharide synthase 1 from Legionella pneumophila subsp. pneumophila (strain Philadelphia 1 / ATCC 33152 / DSM 7513).